Here is a 507-residue protein sequence, read N- to C-terminus: MIPETLNPLNYFTSLVPDLMPVATVPIIILICFLFLIWNHEETSSIPGPGYCMGIGPLISHGRFLWMGVGNACNYYNKTYGEFVRVWISGEETFIISKSSSVFHVMKHWNYVSRFGSKLGLQCIGMYENGIIFNNNPAHWKEIRPFFTKALSGPGLVRMIAICVESTIVHLDKLEEVTTEVGNVNVLNLMRRIMLDTSNKLFLGVPLDESAIVLKIQNYFDAWQALLLKPDIFFKISWLCKKYEEAAKDLKGAMEILIEQKRQKLSTVEKLDEHMDFASQLIFAQNRGDLTAENVNQCVLEMMIAAPDTLSVTLFIMLILIADDPTVEEKMMREIETVMGDREVQSDDMPNLKIVENFIYESMRYQPVVDLIMRKALQDDVIDGYPVKKGTNIILNIGRMHKLEFFPKPNEFSLENFEKNVPSRYFQPFGFGPRGCVGKFIAMVMMKAILVTLLRRCRVQTMKGRGLNNIQKNNDLSMHPIERQPLLEMVFTQEAQTRIRVTKVDQH.

Position 436 (Cys436) interacts with heme.

Belongs to the cytochrome P450 family. The cofactor is heme.

Its subcellular location is the membrane. The enzyme catalyses testosterone + 3 reduced [NADPH--hemoprotein reductase] + 3 O2 = 17beta-estradiol + formate + 3 oxidized [NADPH--hemoprotein reductase] + 4 H2O + 4 H(+). It catalyses the reaction androst-4-ene-3,17-dione + 3 reduced [NADPH--hemoprotein reductase] + 3 O2 = estrone + formate + 3 oxidized [NADPH--hemoprotein reductase] + 4 H2O + 4 H(+). Catalyzes the formation of aromatic C18 estrogens from C19 androgens. The sequence is that of Aromatase (CYP19A1) from Gallus gallus (Chicken).